The sequence spans 449 residues: UDP-glycosyltransferase 76E7 (449 aa).

Residues Ser275, 333-335 (APQ), 350-358 (HCGWNSTLE), and 372-375 (TTDQ) contribute to the UDP-alpha-D-glucose site.

The protein belongs to the UDP-glycosyltransferase family.

This Arabidopsis thaliana (Mouse-ear cress) protein is UDP-glycosyltransferase 76E7 (UGT76E7).